We begin with the raw amino-acid sequence, 453 residues long: Glutamyl-tRNA(Gln) amidotransferase subunit A (453 aa).

Catalysis depends on charge relay system residues Lys-55 and Ser-130. The active-site Acyl-ester intermediate is the Ser-154.

Belongs to the amidase family. GatA subfamily. In terms of assembly, heterotrimer of A, B and C subunits.

It carries out the reaction L-glutamyl-tRNA(Gln) + L-glutamine + ATP + H2O = L-glutaminyl-tRNA(Gln) + L-glutamate + ADP + phosphate + H(+). Allows the formation of correctly charged Gln-tRNA(Gln) through the transamidation of misacylated Glu-tRNA(Gln) in organisms which lack glutaminyl-tRNA synthetase. The reaction takes place in the presence of glutamine and ATP through an activated gamma-phospho-Glu-tRNA(Gln). This is Glutamyl-tRNA(Gln) amidotransferase subunit A from Aliarcobacter butzleri (strain RM4018) (Arcobacter butzleri).